The sequence spans 200 residues: Rho GDP-dissociation inhibitor 2 (200 aa).

Residues 1 to 39 are disordered; it reads MTEKDAQPQLEEADDDLDSKLNYKPPPQKSLKELQEMDK. Residue T2 is modified to N-acetylthreonine. N6-acetyllysine is present on K20. At Y23 the chain carries Phosphotyrosine. An N6-acetyllysine mark is found at K24, K39, K46, K101, and K123. Residues 30 to 39 show a composition bias toward basic and acidic residues; sequence SLKELQEMDK. S144 carries the post-translational modification Phosphoserine. Residue K174 is modified to N6-acetyllysine.

This sequence belongs to the Rho GDI family. Interacts with RHOA. Interacts with RAC1. Interacts with RAC2. Interacts with CDC42. As to expression, preferentially expressed in hematopoietic cells.

The protein resides in the cytoplasm. The protein localises to the cytosol. Regulates the GDP/GTP exchange reaction of the Rho proteins by inhibiting the dissociation of GDP from them, and the subsequent binding of GTP to them. Regulates reorganization of the actin cytoskeleton mediated by Rho family members. The sequence is that of Rho GDP-dissociation inhibitor 2 (Arhgdib) from Mus musculus (Mouse).